We begin with the raw amino-acid sequence, 166 residues long: Putative lipoprotein Lxx21020 (166 aa).

The first 22 residues, 1 to 22 (MTKTTRLLRATTVAAILLGLTG), serve as a signal peptide directing secretion. Cysteine 23 is lipidated: N-palmitoyl cysteine. Cysteine 23 carries the S-diacylglycerol cysteine lipid modification.

The protein localises to the cell membrane. This Leifsonia xyli subsp. xyli (strain CTCB07) protein is Putative lipoprotein Lxx21020.